Reading from the N-terminus, the 149-residue chain is Calmodulin (149 aa).

Ala-2 carries the post-translational modification N-acetylalanine. 4 consecutive EF-hand domains span residues 8–43 (EQIA…LGQN), 44–79 (PTEA…KMKD), 81–116 (DSEE…LGEK), and 117–149 (LTDE…MMAK). Positions 21, 23, 25, 27, 32, 57, 59, 61, 63, 68, 94, 96, 98, 100, and 105 each coordinate Ca(2+). Lys-116 is subject to N6,N6,N6-trimethyllysine. Positions 130, 132, 134, 136, and 141 each coordinate Ca(2+).

This sequence belongs to the calmodulin family.

In terms of biological role, calmodulin mediates the control of a large number of enzymes, ion channels and other proteins by Ca(2+). Among the enzymes to be stimulated by the calmodulin-Ca(2+) complex are a number of protein kinases and phosphatases. The sequence is that of Calmodulin from Mougeotia scalaris (Green alga).